The following is a 708-amino-acid chain: DNA ligase (708 aa).

NAD(+)-binding positions include 35–39, 84–85, and Glu-118; these read DADYD and SL. Lys-120 serves as the catalytic N6-AMP-lysine intermediate. Positions 141, 182, 303, and 327 each coordinate NAD(+). Cys-419, Cys-422, Cys-437, and Cys-443 together coordinate Zn(2+). Residues 628–708 enclose the BRCT domain; sequence TRASEVSGKT…GWAKIVADAQ (81 aa).

The protein belongs to the NAD-dependent DNA ligase family. LigA subfamily. Mg(2+) is required as a cofactor. It depends on Mn(2+) as a cofactor.

The enzyme catalyses NAD(+) + (deoxyribonucleotide)n-3'-hydroxyl + 5'-phospho-(deoxyribonucleotide)m = (deoxyribonucleotide)n+m + AMP + beta-nicotinamide D-nucleotide.. DNA ligase that catalyzes the formation of phosphodiester linkages between 5'-phosphoryl and 3'-hydroxyl groups in double-stranded DNA using NAD as a coenzyme and as the energy source for the reaction. It is essential for DNA replication and repair of damaged DNA. In Rhizorhabdus wittichii (strain DSM 6014 / CCUG 31198 / JCM 15750 / NBRC 105917 / EY 4224 / RW1) (Sphingomonas wittichii), this protein is DNA ligase.